The sequence spans 566 residues: Heat shock protein 70 homolog C57A7.12 (566 aa).

39–46 (AFNRDGKT) serves as a coordination point for ATP. Residues Ser-86 and Ser-500 each carry the phosphoserine modification.

This sequence belongs to the heat shock protein 70 family.

This Schizosaccharomyces pombe (strain 972 / ATCC 24843) (Fission yeast) protein is Heat shock protein 70 homolog C57A7.12.